The primary structure comprises 220 residues: Claudin-24 (220 aa).

At 1 to 10 the chain is on the cytoplasmic side; the sequence is MALIFRTAMQ. The chain crosses the membrane as a helical span at residues 11–31; it reads SVGLLLSLLGWILSIITTYLP. The Extracellular portion of the chain corresponds to 32 to 81; that stretch reads HWKNLNLDLNEMENWTMGLWQTCVIQEEVGMQCKDFDSFLALPAELRVSR. Residues 82–102 traverse the membrane as a helical segment; the sequence is ILMFLSNGLGFLGLLVSGFGL. Topologically, residues 103–117 are cytoplasmic; that stretch reads DCLRIGESQRDLKRR. Residues 118-138 form a helical membrane-spanning segment; sequence LLILGGILSWASGITALVPVS. Topologically, residues 139–161 are extracellular; the sequence is WVAHKTVQEFWDENVPDFVPRWE. Residues 162–182 form a helical membrane-spanning segment; the sequence is FGEALFLGWFAGLSLLLGGCL. The Cytoplasmic segment spans residues 183 to 220; it reads LNCAACSSHAPLALGHYAVAQMQTQCPYLEDGTADPQV.

The protein belongs to the claudin family.

It localises to the cell junction. The protein resides in the tight junction. Its subcellular location is the cell membrane. In terms of biological role, plays a major role in tight junction-specific obliteration of the intercellular space, through calcium-independent cell-adhesion activity. The sequence is that of Claudin-24 from Homo sapiens (Human).